The sequence spans 361 residues: Histidinol-phosphate aminotransferase (361 aa).

Residue lysine 219 is modified to N6-(pyridoxal phosphate)lysine.

The protein belongs to the class-II pyridoxal-phosphate-dependent aminotransferase family. Histidinol-phosphate aminotransferase subfamily. Homodimer. It depends on pyridoxal 5'-phosphate as a cofactor.

The catalysed reaction is L-histidinol phosphate + 2-oxoglutarate = 3-(imidazol-4-yl)-2-oxopropyl phosphate + L-glutamate. It participates in amino-acid biosynthesis; L-histidine biosynthesis; L-histidine from 5-phospho-alpha-D-ribose 1-diphosphate: step 7/9. This Cereibacter sphaeroides (strain ATCC 17029 / ATH 2.4.9) (Rhodobacter sphaeroides) protein is Histidinol-phosphate aminotransferase.